The following is an 81-amino-acid chain: MDPTIAAGALIGGGLIMAGGAIGAGIGDGIAGNALIAGIARQPEAQGRLFTPFFITVGLVEAAYFINLAFMALFVFATPVA.

A run of 2 helical transmembrane segments spans residues 5–25 and 57–77; these read IAAG…IGAG and VGLV…FVFA.

It belongs to the ATPase C chain family. In terms of assembly, F-type ATPases have 2 components, F(1) - the catalytic core - and F(0) - the membrane proton channel. F(1) has five subunits: alpha(3), beta(3), gamma(1), delta(1), epsilon(1). F(0) has three main subunits: a(1), b(2) and c(10-14). The alpha and beta chains form an alternating ring which encloses part of the gamma chain. F(1) is attached to F(0) by a central stalk formed by the gamma and epsilon chains, while a peripheral stalk is formed by the delta and b chains.

It is found in the cell membrane. Functionally, f(1)F(0) ATP synthase produces ATP from ADP in the presence of a proton or sodium gradient. F-type ATPases consist of two structural domains, F(1) containing the extramembraneous catalytic core and F(0) containing the membrane proton channel, linked together by a central stalk and a peripheral stalk. During catalysis, ATP synthesis in the catalytic domain of F(1) is coupled via a rotary mechanism of the central stalk subunits to proton translocation. In terms of biological role, key component of the F(0) channel; it plays a direct role in translocation across the membrane. A homomeric c-ring of between 10-14 subunits forms the central stalk rotor element with the F(1) delta and epsilon subunits. This is ATP synthase subunit c from Mycobacterium sp. (strain JLS).